A 338-amino-acid polypeptide reads, in one-letter code: L-serine dehydratase (338 aa).

Lysine 39 is modified (N6-(pyridoxal phosphate)lysine).

It belongs to the serine/threonine dehydratase family. Pyridoxal 5'-phosphate is required as a cofactor.

The protein resides in the cytoplasm. It catalyses the reaction L-serine = pyruvate + NH4(+). The protein operates within carbohydrate biosynthesis; gluconeogenesis. This chain is L-serine dehydratase (SDL1), found in Saccharomyces cerevisiae (Baker's yeast).